The sequence spans 365 residues: Serine/threonine-protein kinase SAPK6 (365 aa).

Residues 4–260 form the Protein kinase domain; that stretch reads YELLKDIGSG…IREIRNHPWF (257 aa). ATP contacts are provided by residues 10 to 18 and lysine 33; that span reads IGSGNFGVA. Aspartate 123 serves as the catalytic Proton acceptor. Positions 298 to 365 are disordered; it reads VQEAKTPPPS…AHASCDLQKS (68 aa). Residues 317–347 show a composition bias toward acidic residues; it reads TEEEEQEDGKNPDDDEGDRDEEEGEEGDSED.

The protein belongs to the protein kinase superfamily. Ser/Thr protein kinase family. As to quaternary structure, interacts with BZIP46. In terms of processing, may be phosphorylated. In terms of tissue distribution, expressed in leaf blades and leaf sheaths. Expressed in shoots and roots of young seedlings.

It catalyses the reaction L-seryl-[protein] + ATP = O-phospho-L-seryl-[protein] + ADP + H(+). The catalysed reaction is L-threonyl-[protein] + ATP = O-phospho-L-threonyl-[protein] + ADP + H(+). Its activity is regulated as follows. Activated by hyperosmotic stress. May play a role in signal transduction of hyperosmotic response. Can phosphorylate ABI5 in vitro. Can phosphorylate BZIP46 in vitro. In Oryza sativa subsp. japonica (Rice), this protein is Serine/threonine-protein kinase SAPK6.